Consider the following 417-residue polypeptide: D-amino acid dehydrogenase (417 aa).

3 to 17 (IVVLGGGVVGVTSAW) contributes to the FAD binding site.

The protein belongs to the DadA oxidoreductase family. FAD serves as cofactor.

It catalyses the reaction a D-alpha-amino acid + A + H2O = a 2-oxocarboxylate + AH2 + NH4(+). It participates in amino-acid degradation; D-alanine degradation; NH(3) and pyruvate from D-alanine: step 1/1. Oxidative deamination of D-amino acids. The chain is D-amino acid dehydrogenase from Aeromonas salmonicida (strain A449).